The chain runs to 247 residues: MKKLVLLRHGESVWNRENRFTGWTDVGLSEKGIEEAISAGRTLKEEGFVFDVAYTSVLKRAIKTLWLVLEEMDLMWIPEYRHWRLNERHYGALQGLNKAETAERHGMEQVMIWRRSYDIPPPPLTPDDQRFPGSDPRYASLLPEELPLTESLKDTVARFLPYWHETIAPAVKEGKRVLVTAHGNSLRALVKYLDLVSDSEIVNLNIPTGIPLVYELTDNMTPIRSYYLGDPDDVARASRMVADQIKK.

Substrate contacts are provided by residues R8–N15, T21–G22, R60, E87–Y90, K98, R114–R115, and G183–N184. H9 acts as the Tele-phosphohistidine intermediate in catalysis. Catalysis depends on E87, which acts as the Proton donor/acceptor.

This sequence belongs to the phosphoglycerate mutase family. BPG-dependent PGAM subfamily. In terms of assembly, homodimer.

It carries out the reaction (2R)-2-phosphoglycerate = (2R)-3-phosphoglycerate. It functions in the pathway carbohydrate degradation; glycolysis; pyruvate from D-glyceraldehyde 3-phosphate: step 3/5. Functionally, catalyzes the interconversion of 2-phosphoglycerate and 3-phosphoglycerate. The chain is 2,3-bisphosphoglycerate-dependent phosphoglycerate mutase from Geobacter metallireducens (strain ATCC 53774 / DSM 7210 / GS-15).